A 1162-amino-acid chain; its full sequence is MVAIADARYETSSENSLIDTVAKYSVDDGETWETQIAIKNSRVSSVSRVVDPTVIVKGNKLYVLVGSYYSSRSYWSSHGDARDWDILLAVGEVTKSTAGGKITASIKWGSPVSLKKFFPAEMEGMHTNQFLGGAGVAIVASNGNLVYPVQVTNKRKQVFSKIFYSEDDGKTWKFGKGRSDFGCSEPVALEWEGKLIINTRVDWKRRLVYESSDMEKPWVEAVGTVSRVWGPSPKSNQPGSQTSFTAVTIEGMRVMLFTHPLNFKGRCVRDRLNLWLTDNQRIYNVGQVSIGDENSAYSSVLYKDDKLYCLHEINTDEVYSLVFARLVGELRIIKSVLRSWKNWTATCPAFAPLLIQPLRRQRVVVVPLSPRLVLLAFCRQRLPKRMGGSYRCVNASTANAERVRNGLKFAGVGGGALWPVSQQGQNQRYRFANHAFTLVASVTIHEAPRAASPLLGASLDSSGGKKLLGLSYDEKHQWQPIYGSTPVTPTGSWETGKRYHLVLTMANKIGSVYIDGELLEGSGQTVVPDGRTPDISHFYVGGYKRSDMPTISHVTVNNVLLYNRRQLNTEEIRTLFLSQDLIGTEAHMDSSSDSSAHSTPSTPADSSAHSTPSTPVDSSAHSTPSTPADSSAHGTPSTPVDSSAHGTPSTPADSSAHGTPSTPVDSSAHSTPSTPVDSSAHSTPSTPVDSSAHGAPSTPADSSAHGTPSTPVDSSAHGTPSTPADSSAHSTPSTPADSSAHSTPSTPADSSAHSTPSTPVDSSAHGTPSTPADSSAHSTPSTPADSSAHGTPSTPVDSSAHSTPSTPVDSSAHGTPSTPVDSSAHSTPSTPVDSSAHGTPSTPVDSSAHSTPSTPADSSAHSTPSTPADSSAHGTPSTPVDSSAHSTPSTPADSSAHSTPSTPVDSSAHSTPSTPADSSAHGTPSTPVDSSAHGTPSTPADSSAHSTPSTPADSSAHSTPSTPADSSAHSTPSTPVDSSAHSTPSTPADSSAHSTPSTPADSSAHSTPSTPADSSAHSTPSTPVDSSAHSTPSTPADSSAHGTPSTPADSSAHSTPSTPVDSSAHSTPSTPADSSAHGTPSTPADSSAHSTPSTPADSSAHGTPSTPADSSAHSTPSTPAGSSANGTVLILPDGAALSTFSGGGLLLCACALLLHVFFMAVF.

BNR repeat units lie at residues 23–34 (KYSVDDGETWET), 163–174 (FYSEDDGKTWKF), and 209–220 (YESSDMEKPWVE). N-linked (GlcNAc...) asparagine glycans are attached at residues Asn-342 and Asn-394. The tract at residues 587–1123 (HMDSSSDSSA…STPSTPAGSS (537 aa)) is disordered. Residues 589 to 615 (DSSSDSSAHSTPSTPADSSAHSTPSTP) show a composition bias toward low complexity. The interval 589–1120 (DSSSDSSAHS…SAHSTPSTPA (532 aa)) is 44 X 12 AA tandem repeats, LTR domain. Polar residues-rich tracts occupy residues 616–689 (VDSS…TPVD) and 699–1123 (PADS…AGSS). Asn-1125 carries an N-linked (GlcNAc...) asparagine glycan.

This sequence belongs to the glycosyl hydrolase 33 family.

It is found in the cell membrane. It carries out the reaction Hydrolysis of alpha-(2-&gt;3)-, alpha-(2-&gt;6)-, alpha-(2-&gt;8)- glycosidic linkages of terminal sialic acid residues in oligosaccharides, glycoproteins, glycolipids, colominic acid and synthetic substrates.. Developmentally regulated neuraminidase implicated in parasite invasion of cells. The polypeptide is Sialidase (TCNA) (Trypanosoma cruzi).